A 396-amino-acid polypeptide reads, in one-letter code: Phosphopentomutase (396 aa).

Residues aspartate 13, aspartate 288, histidine 293, aspartate 329, histidine 330, and histidine 341 each contribute to the Mn(2+) site.

The protein belongs to the phosphopentomutase family. Mn(2+) serves as cofactor.

It localises to the cytoplasm. The enzyme catalyses 2-deoxy-alpha-D-ribose 1-phosphate = 2-deoxy-D-ribose 5-phosphate. The catalysed reaction is alpha-D-ribose 1-phosphate = D-ribose 5-phosphate. It participates in carbohydrate degradation; 2-deoxy-D-ribose 1-phosphate degradation; D-glyceraldehyde 3-phosphate and acetaldehyde from 2-deoxy-alpha-D-ribose 1-phosphate: step 1/2. In terms of biological role, isomerase that catalyzes the conversion of deoxy-ribose 1-phosphate (dRib-1-P) and ribose 1-phosphate (Rib-1-P) to deoxy-ribose 5-phosphate (dRib-5-P) and ribose 5-phosphate (Rib-5-P), respectively. This is Phosphopentomutase from Clostridium perfringens (strain SM101 / Type A).